Here is a 275-residue protein sequence, read N- to C-terminus: Type III pantothenate kinase (275 aa).

Position 9–16 (9–16) interacts with ATP; that stretch reads DIGNTRLK. Residues Tyr-114 and 121–124 contribute to the substrate site; that span reads GVDR. Residue Asp-123 is the Proton acceptor of the active site. Thr-147 serves as a coordination point for ATP. A substrate-binding site is contributed by Thr-209.

Belongs to the type III pantothenate kinase family. As to quaternary structure, homodimer. The cofactor is NH4(+). K(+) is required as a cofactor.

The protein resides in the cytoplasm. It catalyses the reaction (R)-pantothenate + ATP = (R)-4'-phosphopantothenate + ADP + H(+). The protein operates within cofactor biosynthesis; coenzyme A biosynthesis; CoA from (R)-pantothenate: step 1/5. Functionally, catalyzes the phosphorylation of pantothenate (Pan), the first step in CoA biosynthesis. The sequence is that of Type III pantothenate kinase from Cupriavidus pinatubonensis (strain JMP 134 / LMG 1197) (Cupriavidus necator (strain JMP 134)).